We begin with the raw amino-acid sequence, 625 residues long: MERKEFKAESKRLLEMMVNSIYSQKEIFLRELISNASDAIDKIYYRALSDDSITFNKDDYFIKVTANKEDRTLTVSDTGIGMTKEELESNLGTIAKSGSLAFKTENESKDGHDIIGQFGVGFYSAFMVADKVTVTTKALGEESGYQWESTGADGYTILPIAKESVGTEIRLKLKENSEDESYDEFLEEYRLTSIIKKYSDFIRYPIKMDVTKRELKEGTEDEYEDVIEEQTINSMVPIWRKNKNELKDEDYTNFYHEKRYGFDQPLKHIHISVDGAVRYNAILFIPENIPFDYYTKEFEKGLELYSNGVLIMEKCPDLLPDYYSFVKGMVDSEDLSLNISREMLQHDRQLKLIAKNIKNKITSHLKTLLKDEREKFEQFYRSFGRQLKYGVYSDFGANKEDLQDLLLFYSSTEKKMVTLDEYVSRMKEDQPYIYYATGESYARIEKLPQTEMVADKGYEILYFTEDVDEFAIKMLASYKEKEFRSVSSGDLGFEDDEQKDTAADTDEQKELFEHMKTILDGKVKDVRASKRLKSHPVCLTAEGEVSIEMEKVLRAMPDNQNVQAEKVLEINVNHDVFDVLKASFESDKDKVDLYTKLLYNQALLIEGLPVEDPVAFSNDICKVMA.

An a; substrate-binding region spans residues 1 to 341 (MERKEFKAES…SEDLSLNISR (341 aa)). Residues 342-551 (EMLQHDRQLK…EGEVSIEMEK (210 aa)) form a b region. A c region spans residues 552-625 (VLRAMPDNQN…FSNDICKVMA (74 aa)).

This sequence belongs to the heat shock protein 90 family. Homodimer.

It is found in the cytoplasm. Functionally, molecular chaperone. Has ATPase activity. This chain is Chaperone protein HtpG, found in Halalkalibacterium halodurans (strain ATCC BAA-125 / DSM 18197 / FERM 7344 / JCM 9153 / C-125) (Bacillus halodurans).